A 183-amino-acid chain; its full sequence is Orotate phosphoribosyltransferase (183 aa).

5-phospho-alpha-D-ribose 1-diphosphate is bound by residues arginine 90, lysine 91, lysine 94, and 115–123 (DDVATTGGS). The orotate site is built by threonine 119 and arginine 147.

The protein belongs to the purine/pyrimidine phosphoribosyltransferase family. PyrE subfamily. In terms of assembly, homodimer. It depends on Mg(2+) as a cofactor.

The enzyme catalyses orotidine 5'-phosphate + diphosphate = orotate + 5-phospho-alpha-D-ribose 1-diphosphate. The protein operates within pyrimidine metabolism; UMP biosynthesis via de novo pathway; UMP from orotate: step 1/2. In terms of biological role, catalyzes the transfer of a ribosyl phosphate group from 5-phosphoribose 1-diphosphate to orotate, leading to the formation of orotidine monophosphate (OMP). The sequence is that of Orotate phosphoribosyltransferase from Methanopyrus kandleri (strain AV19 / DSM 6324 / JCM 9639 / NBRC 100938).